A 443-amino-acid polypeptide reads, in one-letter code: Xaa-Pro dipeptidase (443 aa).

Mn(2+) is bound by residues D246, D257, H339, E384, and E423.

The protein belongs to the peptidase M24B family. Bacterial-type prolidase subfamily. It depends on Mn(2+) as a cofactor.

It catalyses the reaction Xaa-L-Pro dipeptide + H2O = an L-alpha-amino acid + L-proline. Splits dipeptides with a prolyl residue in the C-terminal position. The protein is Xaa-Pro dipeptidase of Shigella flexneri serotype 5b (strain 8401).